A 304-amino-acid chain; its full sequence is tRNA (guanine(9)-N1)-methyltransferase (304 aa).

Basic and acidic residues-rich tracts occupy residues 1–26 (MENK…KNET) and 42–72 (RQQE…KRKI). Positions 1 to 72 (MENKDALDIG…LRKEERKRKI (72 aa)) are disordered. One can recognise an SAM-dependent MTase TRM10-type domain in the interval 81–276 (QKKRIRLGKV…EVIPKRKGIL (196 aa)). S-adenosyl-L-methionine contacts are provided by residues Leu-183, Gly-203, 207-211 (DKNRY), Cys-215, Leu-229, and 241-243 (KIL). The Proton acceptor role is filled by Asp-207. Positions 282–304 (SFDVSEDTRSQSNQSDSELEKEN) are disordered. Ser-296 is modified (phosphoserine).

It belongs to the class IV-like SAM-binding methyltransferase superfamily. TRM10 family. In terms of assembly, monomer.

The protein resides in the cytoplasm. It is found in the nucleus. The enzyme catalyses guanosine(9) in tRNA + S-adenosyl-L-methionine = N(1)-methylguanosine(9) in tRNA + S-adenosyl-L-homocysteine + H(+). In terms of biological role, S-adenosyl-L-methionine-dependent guanine N(1)-methyltransferase that catalyzes the formation of N(1)-methylguanine at position 9 (m1G9) in cytoplasmic tRNA. This Schizosaccharomyces pombe (strain 972 / ATCC 24843) (Fission yeast) protein is tRNA (guanine(9)-N1)-methyltransferase.